The chain runs to 280 residues: Probable N-acetyltransferase 14 (280 aa).

Transmembrane regions (helical) follow at residues 37 to 57 and 60 to 80; these read LILHLLTRPLALLLLAILSSI and CVLHSFVLALVIPVFISVIYL. Residues 111–152 form a disordered region; that stretch reads PDLPNPHLGRAKLTTNQEKTRRRKKAKEKEKMNESEQVDEDE. The N-acetyltransferase domain occupies 116–273; it reads PHLGRAKLTT…EKGWLGYPLT (158 aa).

Belongs to the camello family.

It localises to the membrane. In terms of biological role, probable acetyltransferase. This chain is Probable N-acetyltransferase 14 (nat14), found in Danio rerio (Zebrafish).